We begin with the raw amino-acid sequence, 421 residues long: UDP-N-acetylglucosamine 1-carboxyvinyltransferase (421 aa).

Phosphoenolpyruvate is bound at residue 22-23; sequence KN. R92 is a UDP-N-acetyl-alpha-D-glucosamine binding site. The active-site Proton donor is C116. At C116 the chain carries 2-(S-cysteinyl)pyruvic acid O-phosphothioketal. Residues 121-125, D308, and I330 contribute to the UDP-N-acetyl-alpha-D-glucosamine site; that span reads RPVDQ.

Belongs to the EPSP synthase family. MurA subfamily.

It localises to the cytoplasm. The enzyme catalyses phosphoenolpyruvate + UDP-N-acetyl-alpha-D-glucosamine = UDP-N-acetyl-3-O-(1-carboxyvinyl)-alpha-D-glucosamine + phosphate. It participates in cell wall biogenesis; peptidoglycan biosynthesis. In terms of biological role, cell wall formation. Adds enolpyruvyl to UDP-N-acetylglucosamine. The sequence is that of UDP-N-acetylglucosamine 1-carboxyvinyltransferase from Ralstonia nicotianae (strain ATCC BAA-1114 / GMI1000) (Ralstonia solanacearum).